The primary structure comprises 278 residues: Large ribosomal subunit protein uL2 (278 aa).

Disordered stretches follow at residues 29-53 and 221-278; these read PVKS…TSRG and RGVA…KKKR. Positions 269–278 are enriched in basic residues; sequence IRSRHAKKKR.

Belongs to the universal ribosomal protein uL2 family. Part of the 50S ribosomal subunit. Forms a bridge to the 30S subunit in the 70S ribosome.

In terms of biological role, one of the primary rRNA binding proteins. Required for association of the 30S and 50S subunits to form the 70S ribosome, for tRNA binding and peptide bond formation. It has been suggested to have peptidyltransferase activity; this is somewhat controversial. Makes several contacts with the 16S rRNA in the 70S ribosome. In Erythrobacter litoralis (strain HTCC2594), this protein is Large ribosomal subunit protein uL2.